A 179-amino-acid polypeptide reads, in one-letter code: Cell division protein ZapC (179 aa).

It belongs to the ZapC family. Interacts directly with FtsZ.

It is found in the cytoplasm. Its function is as follows. Contributes to the efficiency of the cell division process by stabilizing the polymeric form of the cell division protein FtsZ. Acts by promoting interactions between FtsZ protofilaments and suppressing the GTPase activity of FtsZ. This is Cell division protein ZapC from Tolumonas auensis (strain DSM 9187 / NBRC 110442 / TA 4).